Here is an 87-residue protein sequence, read N- to C-terminus: U3-theraphotoxin-Hhn1a 8 (87 aa).

A signal peptide spans 1 to 24 (MVNMKASMFLTFAGLVLLFVVCYA). Residues 25 to 52 (SGSEEKEFPKEMLSSIFAVDNDFKQEER) constitute a propeptide that is removed on maturation. 3 disulfide bridges follow: C54–C67, C61–C72, and C66–C79.

It belongs to the neurotoxin 10 (Hwtx-1) family. 51 (Hntx-8) subfamily. Hntx-8 sub-subfamily. As to expression, expressed by the venom gland.

It localises to the secreted. Ion channel inhibitor. This is U3-theraphotoxin-Hhn1a 8 from Cyriopagopus hainanus (Chinese bird spider).